The following is a 237-amino-acid chain: uncharacterized protein (237 aa).

In terms of domain architecture, GP-PDE spans 4–237 (QFLIAHRGYS…VKFQIAAQLY (234 aa)).

The protein to glycerophosphoryl diester phosphodiesterases (EC 3.1.4.46). It to M.genitalium MG293.

This is an uncharacterized protein from Mycoplasma pneumoniae (strain ATCC 29342 / M129 / Subtype 1) (Mycoplasmoides pneumoniae).